The sequence spans 413 residues: MTYPEEIDEYSLIQNGLKSLNEAAQRCQQTKHSSQDSSIEGCSARQSARDELVLEALKFLQIAQGPIDAAATCYERTAHLASVRALLEMGVFEALPTGRVSRRTEELARELNVDESLLARLLRNSSLYGPFEETGPGQYRHTPFSEAYLRPEIRGMFRFAMDDHMPAHLKLHEFLQRNGWQEPSSTTDNPYTYAHKTNGKSMFDNLSEKPERMKAFNNGMTVQAMTPLWMIDLFPWRSLAQLKPTAGQVLAVDIGGGKGKAISRIRSFCNGLPGRYILQDQEHVVKSVEGSLDPSIERMAYNFFTEQPIRGAVTYLIRRCLHNWPQDSVVCILQNIAAAMEPGKSRLLIEEIVVPAEKAGVEEGWMDMIMMSLGAKQRTLKEWEMVLGLAGLEVKKVYQIPGNCHGLIEAWLK.

S-adenosyl-L-methionine is bound by residues 255–256, aspartate 280, 302–303, and arginine 319; these read GG and NF. Histidine 322 (proton acceptor) is an active-site residue.

This sequence belongs to the class I-like SAM-binding methyltransferase superfamily. Cation-independent O-methyltransferase family. S-adenosyl-L-methionine serves as cofactor.

It functions in the pathway secondary metabolite biosynthesis. Functionally, non-reducing polyketide synthase; part of the gene cluster that mediates the biosynthesis of the bicoumarin kotanin. The non-reducing polyketide synthase ktnS first catalyzes the formation of the pentaketidic 4,7-dihydroxy-5-methylcoumarin from acetyl coenzyme A and 4 malonyl coenzyme A molecules. Further O-methylation by ktnB leads to the formation of 7-demethylsiderin. Then, an oxidative phenol coupling catalyzed by the cytochrome P450 monooxygenase ktnC forms the 8,8'-dimer P-orlandin via dimerization the monomeric precursor, 7-demethylsiderin. P-orlandin is subsequently O-methylated in a stepwise fashion to demethylkotanin and kotanin. The polypeptide is O-methyltransferase kntB (Aspergillus niger (strain ATCC MYA-4892 / CBS 513.88 / FGSC A1513)).